We begin with the raw amino-acid sequence, 31 residues long: Cytochrome b6-f complex subunit 6 (31 aa).

Residues 4 to 24 (ILTYFGILFGILTITVIIFVA) traverse the membrane as a helical segment.

The protein belongs to the PetL family. In terms of assembly, the 4 large subunits of the cytochrome b6-f complex are cytochrome b6, subunit IV (17 kDa polypeptide, PetD), cytochrome f and the Rieske protein, while the 4 small subunits are PetG, PetL, PetM and PetN. The complex functions as a dimer.

Its subcellular location is the plastid. The protein resides in the chloroplast thylakoid membrane. In terms of biological role, component of the cytochrome b6-f complex, which mediates electron transfer between photosystem II (PSII) and photosystem I (PSI), cyclic electron flow around PSI, and state transitions. PetL is important for photoautotrophic growth as well as for electron transfer efficiency and stability of the cytochrome b6-f complex. The polypeptide is Cytochrome b6-f complex subunit 6 (Chaetosphaeridium globosum (Charophycean green alga)).